Here is a 1184-residue protein sequence, read N- to C-terminus: Fibulin-2 (1184 aa).

A signal peptide spans methionine 1–alanine 27. The tract at residues alanine 28 to cysteine 177 is subdomain NA (Cys-rich). The tract at residues alanine 28 to threonine 444 is n. The segment at histidine 178–threonine 444 is subdomain NB (Cys-free). Asparagine 180 is a glycosylation site (N-linked (GlcNAc...) asparagine). 2 disordered regions span residues valine 221 to threonine 293 and isoleucine 399 to serine 437. The span at glycine 224–serine 236 shows a compositional bias: gly residues. Over residues proline 252–glycine 261 the composition is skewed to low complexity. A compositionally biased stretch (acidic residues) spans aspartate 276–glutamate 288. Position 277 is a phosphoserine (serine 277). Over residues proline 423 to glycine 436 the composition is skewed to polar residues. Intrachain disulfides connect cysteine 445-cysteine 472, cysteine 446-cysteine 479, cysteine 459-cysteine 480, cysteine 489-cysteine 518, cysteine 502-cysteine 519, cysteine 521-cysteine 545, cysteine 522-cysteine 552, cysteine 535-cysteine 553, cysteine 608-cysteine 620, cysteine 616-cysteine 629, cysteine 631-cysteine 644, cysteine 683-cysteine 693, cysteine 689-cysteine 702, cysteine 704-cysteine 717, cysteine 723-cysteine 736, cysteine 730-cysteine 745, cysteine 751-cysteine 762, cysteine 768-cysteine 781, cysteine 775-cysteine 790, cysteine 796-cysteine 808, cysteine 814-cysteine 827, cysteine 821-cysteine 836, cysteine 843-cysteine 856, cysteine 862-cysteine 875, cysteine 869-cysteine 884, cysteine 886-cysteine 899, cysteine 905-cysteine 917, cysteine 913-cysteine 926, cysteine 928-cysteine 941, cysteine 947-cysteine 956, cysteine 952-cysteine 965, cysteine 967-cysteine 980, cysteine 986-cysteine 998, cysteine 994-cysteine 1007, cysteine 1009-cysteine 1023, cysteine 1029-cysteine 1042, cysteine 1036-cysteine 1051, and cysteine 1056-cysteine 1068. Anaphylatoxin-like domains are found at residues cysteine 445–cysteine 480, serine 488–cysteine 519, and cysteine 521–cysteine 553. Asparagine 507 carries N-linked (GlcNAc...) asparagine glycosylation. One can recognise an EGF-like 1; calcium-binding domain in the interval aspartate 604 to arginine 645. Positions glutamine 679–glutamate 718 constitute an EGF-like 2 domain. Positions aspartate 719–glutamate 763 constitute an EGF-like 3; calcium-binding domain. Residues aspartate 764 to valine 809 form the EGF-like 4; calcium-binding domain. In terms of domain architecture, EGF-like 5; calcium-binding spans aspartate 810–valine 857. The 43-residue stretch at aspartate 858–isoleucine 900 folds into the EGF-like 6; calcium-binding domain. Positions aspartate 901–glutamate 942 constitute an EGF-like 7; calcium-binding domain. The EGF-like 8; calcium-binding domain maps to aspartate 943–threonine 981. Residues aspartate 982 to lysine 1024 enclose the EGF-like 9; calcium-binding domain. One can recognise an EGF-like 10; calcium-binding domain in the interval aspartate 1025 to glutamate 1069. An N-linked (GlcNAc...) asparagine glycan is attached at asparagine 1035. The segment at arginine 1070–leucine 1184 is domain III.

This sequence belongs to the fibulin family. As to quaternary structure, homotrimer; disulfide-linked. Interacts with LAMA2. Interacts with FBN1 (via N-terminal domain). Forms a ternary complex with ELN and FBN1. O-glycosylated with core 1 or possibly core 8 glycans. It is unsure if the O-glycosylation is on Thr-347 or Ser-348. Component of both basement membranes and other connective tissues. Expressed in heart, placenta and ovary.

The protein resides in the secreted. It is found in the extracellular space. Its subcellular location is the extracellular matrix. Functionally, its binding to fibronectin and some other ligands is calcium dependent. May act as an adapter that mediates the interaction between FBN1 and ELN. This chain is Fibulin-2 (FBLN2), found in Homo sapiens (Human).